The sequence spans 500 residues: Na(+)/H(+) antiporter NhaB (500 aa).

Helical transmembrane passes span F28–G50, G68–A88, L98–F118, L121–L141, F145–V165, L205–P225, Q244–E264, V311–I331, F350–I370, M394–I414, V449–L469, and M477–S497.

This sequence belongs to the NhaB Na(+)/H(+) (TC 2.A.34) antiporter family.

It is found in the cell inner membrane. The catalysed reaction is 2 Na(+)(in) + 3 H(+)(out) = 2 Na(+)(out) + 3 H(+)(in). In terms of biological role, na(+)/H(+) antiporter that extrudes sodium in exchange for external protons. In Pseudomonas aeruginosa (strain LESB58), this protein is Na(+)/H(+) antiporter NhaB.